The following is a 206-amino-acid chain: Thymidylate kinase (206 aa).

10–17 (GVDGVGKT) contacts ATP.

This sequence belongs to the thymidylate kinase family.

It catalyses the reaction dTMP + ATP = dTDP + ADP. Functionally, phosphorylation of dTMP to form dTDP in both de novo and salvage pathways of dTTP synthesis. In Bifidobacterium longum (strain NCC 2705), this protein is Thymidylate kinase.